Consider the following 423-residue polypeptide: Serine--tRNA ligase (423 aa).

230–232 (TAE) contributes to the L-serine binding site. Residue 261 to 263 (RSE) participates in ATP binding. Residue E284 participates in L-serine binding. 348–351 (EISS) is a binding site for ATP. S384 contacts L-serine.

This sequence belongs to the class-II aminoacyl-tRNA synthetase family. Type-1 seryl-tRNA synthetase subfamily. Homodimer. The tRNA molecule binds across the dimer.

The protein localises to the cytoplasm. It catalyses the reaction tRNA(Ser) + L-serine + ATP = L-seryl-tRNA(Ser) + AMP + diphosphate + H(+). It carries out the reaction tRNA(Sec) + L-serine + ATP = L-seryl-tRNA(Sec) + AMP + diphosphate + H(+). The protein operates within aminoacyl-tRNA biosynthesis; selenocysteinyl-tRNA(Sec) biosynthesis; L-seryl-tRNA(Sec) from L-serine and tRNA(Sec): step 1/1. Its function is as follows. Catalyzes the attachment of serine to tRNA(Ser). Is also able to aminoacylate tRNA(Sec) with serine, to form the misacylated tRNA L-seryl-tRNA(Sec), which will be further converted into selenocysteinyl-tRNA(Sec). In Syntrophobacter fumaroxidans (strain DSM 10017 / MPOB), this protein is Serine--tRNA ligase.